Here is a 583-residue protein sequence, read N- to C-terminus: Sensor protein SrrB (583 aa).

The Cytoplasmic segment spans residues 1–11 (MMSRLNSVVIK). The chain crosses the membrane as a helical span at residues 12 to 32 (LWLTIILIVTTVLILLSIALI). Residues 33–174 (TFMQYYFTQE…SIEDTNNAIT (142 aa)) are Extracellular-facing. The helical transmembrane segment at 175–195 (IITIITAVIFLTITTVFAFFL) threads the bilayer. Residues 196 to 583 (SSRITKPLRR…TFIIKLPKPE (388 aa)) are Cytoplasmic-facing. The 53-residue stretch at 197 to 249 (SRITKPLRRLRDQATRVSEGDYSYKPSVTTKDEIGQLSQAFNQMSTEIEEHVD) folds into the HAMP domain. Residues 366–583 (NVSHELRTPI…TFIIKLPKPE (218 aa)) enclose the Histidine kinase domain. Histidine 369 is subject to Phosphohistidine; by autocatalysis.

It localises to the cell membrane. It catalyses the reaction ATP + protein L-histidine = ADP + protein N-phospho-L-histidine.. Member of the two-component regulatory system SrrA/SrrB, which is involved in the global regulation of staphylococcal virulence factors in response to environmental oxygen levels as well as biofilm formation. Also plays an essential role in host-derived nitric oxide resistance by regulating hmp/flavohemoglobin, an enzyme that detoxifies nitric oxide by converting it to nitrate. Functions as a sensor protein kinase which is autophosphorylated at a histidine residue and transfers its phosphate group to SrrA. In turn, SrrA binds to the upstream promoter regions of the target genes to positively and negatively regulate their expression. This chain is Sensor protein SrrB (srrB), found in Staphylococcus aureus (strain Mu50 / ATCC 700699).